The primary structure comprises 99 residues: Large ribosomal subunit protein bL27 (99 aa).

A propeptide spanning residues 1–9 (MLIMNLQLF) is cleaved from the precursor.

Belongs to the bacterial ribosomal protein bL27 family. In terms of processing, the N-terminus is cleaved by ribosomal processing cysteine protease Prp.

In Clostridium beijerinckii (strain ATCC 51743 / NCIMB 8052) (Clostridium acetobutylicum), this protein is Large ribosomal subunit protein bL27.